The primary structure comprises 74 residues: EMBRYO SURROUNDING FACTOR 1-like protein 4 (74 aa).

A signal peptide spans 1-22 (MKSSHAYLVCILLLSLFSLHQC). Intrachain disulfides connect Cys-36/Cys-51, Cys-41/Cys-70, Cys-49/Cys-66, and Cys-52/Cys-59.

Belongs to the MEG family. Expressed in flowers.

This chain is EMBRYO SURROUNDING FACTOR 1-like protein 4 (ESFL4), found in Arabidopsis thaliana (Mouse-ear cress).